Here is a 290-residue protein sequence, read N- to C-terminus: Ribosomal RNA small subunit methyltransferase A (290 aa).

Residues histidine 37, valine 39, glycine 64, glutamate 85, aspartate 115, and asparagine 132 each contribute to the S-adenosyl-L-methionine site.

Belongs to the class I-like SAM-binding methyltransferase superfamily. rRNA adenine N(6)-methyltransferase family. RsmA subfamily.

The protein localises to the cytoplasm. It carries out the reaction adenosine(1518)/adenosine(1519) in 16S rRNA + 4 S-adenosyl-L-methionine = N(6)-dimethyladenosine(1518)/N(6)-dimethyladenosine(1519) in 16S rRNA + 4 S-adenosyl-L-homocysteine + 4 H(+). Specifically dimethylates two adjacent adenosines (A1518 and A1519) in the loop of a conserved hairpin near the 3'-end of 16S rRNA in the 30S particle. May play a critical role in biogenesis of 30S subunits. The chain is Ribosomal RNA small subunit methyltransferase A from Acidothermus cellulolyticus (strain ATCC 43068 / DSM 8971 / 11B).